Here is a 407-residue protein sequence, read N- to C-terminus: 4-hydroxy-3-methylbut-2-en-1-yl diphosphate synthase (ferredoxin) (407 aa).

[4Fe-4S] cluster contacts are provided by Cys-312, Cys-315, Cys-346, and Glu-353.

Belongs to the IspG family. It depends on [4Fe-4S] cluster as a cofactor.

It carries out the reaction (2E)-4-hydroxy-3-methylbut-2-enyl diphosphate + 2 oxidized [2Fe-2S]-[ferredoxin] + H2O = 2-C-methyl-D-erythritol 2,4-cyclic diphosphate + 2 reduced [2Fe-2S]-[ferredoxin] + H(+). It functions in the pathway isoprenoid biosynthesis; isopentenyl diphosphate biosynthesis via DXP pathway; isopentenyl diphosphate from 1-deoxy-D-xylulose 5-phosphate: step 5/6. Its function is as follows. Converts 2C-methyl-D-erythritol 2,4-cyclodiphosphate (ME-2,4cPP) into 1-hydroxy-2-methyl-2-(E)-butenyl 4-diphosphate. The protein is 4-hydroxy-3-methylbut-2-en-1-yl diphosphate synthase (ferredoxin) of Synechococcus elongatus (strain ATCC 33912 / PCC 7942 / FACHB-805) (Anacystis nidulans R2).